The following is a 773-amino-acid chain: Probable dipeptidyl peptidase 4 (773 aa).

Positions 1–18 (MKLSVLSVLLVSVAQAAA) are cleaved as a signal peptide. Asn37, Asn80, Asn112, Asn220, Asn471, and Asn496 each carry an N-linked (GlcNAc...) asparagine glycan. The active-site Charge relay system is Ser619. The N-linked (GlcNAc...) asparagine glycan is linked to Asn671. Active-site charge relay system residues include Asp696 and His731.

It belongs to the peptidase S9B family.

It is found in the secreted. It catalyses the reaction Release of an N-terminal dipeptide, Xaa-Yaa-|-Zaa-, from a polypeptide, preferentially when Yaa is Pro, provided Zaa is neither Pro nor hydroxyproline.. Functionally, extracellular dipeptidyl-peptidase which removes N-terminal dipeptides sequentially from polypeptides having unsubstituted N-termini provided that the penultimate residue is proline. The protein is Probable dipeptidyl peptidase 4 (dpp4) of Emericella nidulans (strain FGSC A4 / ATCC 38163 / CBS 112.46 / NRRL 194 / M139) (Aspergillus nidulans).